The sequence spans 421 residues: Enolase (421 aa).

Residue Gln-161 participates in (2R)-2-phosphoglycerate binding. Residue Glu-203 is the Proton donor of the active site. The Mg(2+) site is built by Asp-240, Glu-283, and Asp-310. (2R)-2-phosphoglycerate-binding residues include Lys-335, Arg-364, Ser-365, and Lys-386. Lys-335 functions as the Proton acceptor in the catalytic mechanism.

This sequence belongs to the enolase family. Mg(2+) is required as a cofactor.

The protein resides in the cytoplasm. It is found in the secreted. Its subcellular location is the cell surface. The enzyme catalyses (2R)-2-phosphoglycerate = phosphoenolpyruvate + H2O. It participates in carbohydrate degradation; glycolysis; pyruvate from D-glyceraldehyde 3-phosphate: step 4/5. Catalyzes the reversible conversion of 2-phosphoglycerate (2-PG) into phosphoenolpyruvate (PEP). It is essential for the degradation of carbohydrates via glycolysis. This is Enolase from Sulfurimonas denitrificans (strain ATCC 33889 / DSM 1251) (Thiomicrospira denitrificans (strain ATCC 33889 / DSM 1251)).